The chain runs to 295 residues: Cyclin-G1 (295 aa).

Belongs to the cyclin family. Cyclin G subfamily. In terms of tissue distribution, high levels in skeletal muscle, ovary, kidney and colon.

It localises to the nucleus. Its function is as follows. May play a role in growth regulation. Is associated with G2/M phase arrest in response to DNA damage. May be an intermediate by which p53 mediates its role as an inhibitor of cellular proliferation. The polypeptide is Cyclin-G1 (CCNG1) (Homo sapiens (Human)).